We begin with the raw amino-acid sequence, 196 residues long: Agamous-like MADS-box protein AGL31 (196 aa).

Positions 1 to 61 constitute an MADS-box domain; the sequence is MGRKKVEIKR…GKLYKSASGD (61 aa). The region spanning 80–170 is the K-box domain; that stretch reads ALDLAEKTRN…ASQVGKKTFL (91 aa).

As to expression, expressed in most plant tissues, roots, seedlings, leaves, stems, inflorescences, pollen, siliques and flowers.

Its subcellular location is the nucleus. Functionally, probable transcription factor that prevents vernalization by short periods of cold. Acts as a floral repressor. This is Agamous-like MADS-box protein AGL31 (AGL31) from Arabidopsis thaliana (Mouse-ear cress).